Here is a 697-residue protein sequence, read N- to C-terminus: Ribosomal RNA large subunit methyltransferase K/L (697 aa).

Residues 43–154 (ILYNSLMWSR…QNLVHIMLDL (112 aa)) form the THUMP domain.

The protein belongs to the methyltransferase superfamily. RlmKL family.

The protein resides in the cytoplasm. The enzyme catalyses guanosine(2445) in 23S rRNA + S-adenosyl-L-methionine = N(2)-methylguanosine(2445) in 23S rRNA + S-adenosyl-L-homocysteine + H(+). It catalyses the reaction guanosine(2069) in 23S rRNA + S-adenosyl-L-methionine = N(2)-methylguanosine(2069) in 23S rRNA + S-adenosyl-L-homocysteine + H(+). Functionally, specifically methylates the guanine in position 2445 (m2G2445) and the guanine in position 2069 (m7G2069) of 23S rRNA. This Buchnera aphidicola subsp. Schizaphis graminum (strain Sg) protein is Ribosomal RNA large subunit methyltransferase K/L.